A 232-amino-acid chain; its full sequence is Cytidylate kinase (232 aa).

Gly-10–Thr-18 is a binding site for ATP.

The protein belongs to the cytidylate kinase family. Type 1 subfamily.

It localises to the cytoplasm. The enzyme catalyses CMP + ATP = CDP + ADP. It catalyses the reaction dCMP + ATP = dCDP + ADP. The protein is Cytidylate kinase of Phytoplasma mali (strain AT).